A 142-amino-acid chain; its full sequence is Large ribosomal subunit protein uL13 (142 aa).

This sequence belongs to the universal ribosomal protein uL13 family. In terms of assembly, part of the 50S ribosomal subunit.

This protein is one of the early assembly proteins of the 50S ribosomal subunit, although it is not seen to bind rRNA by itself. It is important during the early stages of 50S assembly. The chain is Large ribosomal subunit protein uL13 from Actinobacillus succinogenes (strain ATCC 55618 / DSM 22257 / CCUG 43843 / 130Z).